Here is a 1164-residue protein sequence, read N- to C-terminus: DNA-directed RNA polymerase subunit beta (1164 aa).

The protein belongs to the RNA polymerase beta chain family. As to quaternary structure, the RNAP catalytic core consists of 2 alpha, 1 beta, 1 beta' and 1 omega subunit. When a sigma factor is associated with the core the holoenzyme is formed, which can initiate transcription.

It catalyses the reaction RNA(n) + a ribonucleoside 5'-triphosphate = RNA(n+1) + diphosphate. DNA-dependent RNA polymerase catalyzes the transcription of DNA into RNA using the four ribonucleoside triphosphates as substrates. This Saccharopolyspora erythraea (strain ATCC 11635 / DSM 40517 / JCM 4748 / NBRC 13426 / NCIMB 8594 / NRRL 2338) protein is DNA-directed RNA polymerase subunit beta.